A 281-amino-acid chain; its full sequence is Cis-2,3-dihydrobiphenyl-2,3-diol dehydrogenase (281 aa).

10-34 provides a ligand contact to NAD(+); sequence ITGGASGLGRALVDRFVAEGARVAV. Position 142 (serine 142) interacts with substrate. The active-site Proton acceptor is tyrosine 155.

Belongs to the short-chain dehydrogenases/reductases (SDR) family. In terms of assembly, homotetramer.

It carries out the reaction (2R,3S)-3-phenylcyclohexa-3,5-diene-1,2-diol + NAD(+) = biphenyl-2,3-diol + NADH + H(+). The protein operates within xenobiotic degradation; biphenyl degradation; 2-hydroxy-2,4-pentadienoate and benzoate from biphenyl: step 2/4. In Comamonas testosteroni (Pseudomonas testosteroni), this protein is Cis-2,3-dihydrobiphenyl-2,3-diol dehydrogenase (bphB).